A 216-amino-acid polypeptide reads, in one-letter code: uncharacterized protein (216 aa).

Positions 182–193 (STSNASVNSDDA) are enriched in polar residues. Positions 182-204 (STSNASVNSDDASTAELGPTSEE) are disordered.

This is an uncharacterized protein from Caenorhabditis elegans.